The sequence spans 378 residues: AT-hook motif nuclear-localized protein 5 (378 aa).

Disordered stretches follow at residues 30-70 (QVAS…AEHR), 88-160 (VQPT…GRKQ), and 302-378 (NNNK…LTRG). Over residues 104-113 (VKKKRGRPRK) the composition is skewed to basic residues. The short motif at 105-113 (KKKRGRPRK) is the Bipartite nuclear localization signal element. 2 DNA-binding regions (a.T hook) span residues 105 to 117 (KKKRGRPRKYVPD) and 147 to 159 (KRARGRPPGTGRK). The PPC domain occupies 171-314 (TSAGLAFAPH…KTIKQEIKPK (144 aa)). Polar residues-rich tracts occupy residues 316-327 (EPTNSEMETTPG) and 335-345 (STGQHTPQNFP).

As to quaternary structure, interacts with AHL29.

The protein localises to the nucleus. Transcription factor that specifically binds AT-rich DNA sequences related to the nuclear matrix attachment regions (MARs). The polypeptide is AT-hook motif nuclear-localized protein 5 (Arabidopsis thaliana (Mouse-ear cress)).